Here is a 156-residue protein sequence, read N- to C-terminus: Small ribosomal subunit protein uS7 (156 aa).

The protein belongs to the universal ribosomal protein uS7 family. Part of the 30S ribosomal subunit. Contacts proteins S9 and S11.

In terms of biological role, one of the primary rRNA binding proteins, it binds directly to 16S rRNA where it nucleates assembly of the head domain of the 30S subunit. Is located at the subunit interface close to the decoding center, probably blocks exit of the E-site tRNA. This Rhizobium meliloti (strain 1021) (Ensifer meliloti) protein is Small ribosomal subunit protein uS7.